Reading from the N-terminus, the 43-residue chain is uncharacterized protein (43 aa).

Composition is skewed to polar residues over residues 1–19 (MSQKLSFFQQNTRNGSGAS) and 33–43 (PENSISKTFSK). The segment at 1–43 (MSQKLSFFQQNTRNGSGASRTLVIKPPTIQPKPENSISKTFSK) is disordered.

This is an uncharacterized protein from Dictyostelium discoideum (Social amoeba).